The chain runs to 357 residues: tRNA/tmRNA (uracil-C(5))-methyltransferase (357 aa).

The S-adenosyl-L-methionine site is built by Gln-180, Tyr-209, Asn-214, Glu-230, and Asp-290. Cys-315 acts as the Nucleophile in catalysis. Residue Glu-349 is the Proton acceptor of the active site.

This sequence belongs to the class I-like SAM-binding methyltransferase superfamily. RNA M5U methyltransferase family. TrmA subfamily.

The enzyme catalyses uridine(54) in tRNA + S-adenosyl-L-methionine = 5-methyluridine(54) in tRNA + S-adenosyl-L-homocysteine + H(+). The catalysed reaction is uridine(341) in tmRNA + S-adenosyl-L-methionine = 5-methyluridine(341) in tmRNA + S-adenosyl-L-homocysteine + H(+). In terms of biological role, dual-specificity methyltransferase that catalyzes the formation of 5-methyluridine at position 54 (m5U54) in all tRNAs, and that of position 341 (m5U341) in tmRNA (transfer-mRNA). This chain is tRNA/tmRNA (uracil-C(5))-methyltransferase, found in Campylobacter jejuni subsp. jejuni serotype O:2 (strain ATCC 700819 / NCTC 11168).